The primary structure comprises 441 residues: Ribosomal protein uS12 methylthiotransferase RimO (441 aa).

The 111-residue stretch at 7–117 folds into the MTTase N-terminal domain; sequence PKVSFVSLGC…VLDAVHRALP (111 aa). Positions 16, 52, 81, 148, 152, and 155 each coordinate [4Fe-4S] cluster. One can recognise a Radical SAM core domain in the interval 134–371; that stretch reads LTPRHYAYLK…MARQQKISAR (238 aa). Positions 374 to 440 constitute a TRAM domain; it reads KRKVGTRQQV…AYDLHGSVAG (67 aa).

The protein belongs to the methylthiotransferase family. RimO subfamily. [4Fe-4S] cluster serves as cofactor.

Its subcellular location is the cytoplasm. It catalyses the reaction L-aspartate(89)-[ribosomal protein uS12]-hydrogen + (sulfur carrier)-SH + AH2 + 2 S-adenosyl-L-methionine = 3-methylsulfanyl-L-aspartate(89)-[ribosomal protein uS12]-hydrogen + (sulfur carrier)-H + 5'-deoxyadenosine + L-methionine + A + S-adenosyl-L-homocysteine + 2 H(+). Catalyzes the methylthiolation of an aspartic acid residue of ribosomal protein uS12. This Rhodopseudomonas palustris (strain BisB18) protein is Ribosomal protein uS12 methylthiotransferase RimO.